A 751-amino-acid polypeptide reads, in one-letter code: Photosystem I P700 chlorophyll a apoprotein A1 (751 aa).

8 helical membrane-spanning segments follow: residues 72–95 (IFSAHFGHLAVVFVWLSGMYFHGA), 158–181 (LYCTAIGGLVMAALMLFAGWFHYH), 197–221 (MNHHLAGLLGLGSLGWAGHQIHVSM), 293–311 (TAHHHLAIAVLFIIAGHMY), 348–371 (WHAQLAINLALLGSLTIIVAQHMY), 387–413 (LSLFTHHMWIGGFLIVGAGAHGAIFMV), 435–457 (AIISHLNWVCIFLGFHSFGLYIH), and 532–550 (FMVHHIHAFTIHVTALILL). Residues Cys-574 and Cys-583 each coordinate [4Fe-4S] cluster. 2 helical membrane passes run 590 to 611 (HVFLGLFWMYNSLSIVIFHFSW) and 665 to 687 (LSAYGIMFLAGHFVFAFSLMFLF). Residue His-676 participates in chlorophyll a' binding. Chlorophyll a contacts are provided by Met-684 and Tyr-692. A phylloquinone-binding site is contributed by Trp-693. Residues 725–745 (AVGVAHYLLGGIVTTWAFFLA) traverse the membrane as a helical segment.

This sequence belongs to the PsaA/PsaB family. As to quaternary structure, the PsaA/B heterodimer binds the P700 chlorophyll special pair and subsequent electron acceptors. PSI consists of a core antenna complex that captures photons, and an electron transfer chain that converts photonic excitation into a charge separation. The cyanobacterial PSI reaction center is composed of one copy each of PsaA,B,C,D,E,F,I,J,K,L,M and X, and forms trimeric complexes. Requires PSI electron transfer chain: 5 chlorophyll a, 1 chlorophyll a', 2 phylloquinones and 3 4Fe-4S clusters. PSI core antenna: 90 chlorophyll a, 22 carotenoids, 3 phospholipids and 1 galactolipid. P700 is a chlorophyll a/chlorophyll a' dimer, A0 is one or more chlorophyll a, A1 is one or both phylloquinones and FX is a shared 4Fe-4S iron-sulfur center. as cofactor.

It is found in the cellular thylakoid membrane. It catalyses the reaction reduced [plastocyanin] + hnu + oxidized [2Fe-2S]-[ferredoxin] = oxidized [plastocyanin] + reduced [2Fe-2S]-[ferredoxin]. Functionally, psaA and PsaB bind P700, the primary electron donor of photosystem I (PSI), as well as the electron acceptors A0, A1 and FX. PSI is a plastocyanin/cytochrome c6-ferredoxin oxidoreductase, converting photonic excitation into a charge separation, which transfers an electron from the donor P700 chlorophyll pair to the spectroscopically characterized acceptors A0, A1, FX, FA and FB in turn. Oxidized P700 is reduced on the lumenal side of the thylakoid membrane by plastocyanin or cytochrome c6. This chain is Photosystem I P700 chlorophyll a apoprotein A1, found in Synechocystis sp. (strain ATCC 27184 / PCC 6803 / Kazusa).